The chain runs to 84 residues: Putative membrane protein insertion efficiency factor (84 aa).

Positions 63-84 (GEDPVPNHFTLRRNKKEKPSKS) are disordered.

Belongs to the UPF0161 family.

The protein localises to the cell membrane. Functionally, could be involved in insertion of integral membrane proteins into the membrane. The chain is Putative membrane protein insertion efficiency factor from Streptococcus mutans serotype c (strain ATCC 700610 / UA159).